The following is a 53-amino-acid chain: ATP synthase protein 8 (53 aa).

Residues 4–24 (MAPISWLLLFIIFSITFILFC) traverse the membrane as a helical segment.

The protein belongs to the ATPase protein 8 family. In terms of assembly, F-type ATPases have 2 components, CF(1) - the catalytic core - and CF(0) - the membrane proton channel.

The protein resides in the mitochondrion membrane. In terms of biological role, mitochondrial membrane ATP synthase (F(1)F(0) ATP synthase or Complex V) produces ATP from ADP in the presence of a proton gradient across the membrane which is generated by electron transport complexes of the respiratory chain. F-type ATPases consist of two structural domains, F(1) - containing the extramembraneous catalytic core and F(0) - containing the membrane proton channel, linked together by a central stalk and a peripheral stalk. During catalysis, ATP synthesis in the catalytic domain of F(1) is coupled via a rotary mechanism of the central stalk subunits to proton translocation. Part of the complex F(0) domain. Minor subunit located with subunit a in the membrane. In Drosophila mauritiana (Fruit fly), this protein is ATP synthase protein 8 (mt:ATPase8).